A 270-amino-acid chain; its full sequence is Protein tonB2 (270 aa).

The Cytoplasmic segment spans residues 1-51; sequence MATPQPVDARTQPWRETPGGDLVALGRPVRQALHLVRHNPAQGRVLSRRET. A helical transmembrane segment spans residues 52 to 69; it reads ILLVLFALTLHGAVIHWL. Over 70–270 the chain is Periplasmic; the sequence is SQQRTPALPE…VSVPIDFKLN (201 aa). A disordered region spans residues 80 to 187; that stretch reads VPPQVPPMTI…LTPPSANAGY (108 aa). The segment covering 94–118 has biased composition (pro residues); that stretch reads PAPPVVEPPPPEPLPPVVEEPPPPV. Basic residues predominate over residues 133-143; the sequence is PKPKPKPKPQP. A compositionally biased stretch (pro residues) spans 144 to 180; it reads RPKPAPKAVEPAPPAPPQPAAPPAPPAPAAAPAPLTP. In terms of domain architecture, TonB C-terminal spans 180-270; that stretch reads PPSANAGYLH…VSVPIDFKLN (91 aa).

It belongs to the TonB family. In terms of assembly, homodimer. Forms a complex with the accessory proteins ExbB and ExbD.

Its subcellular location is the cell inner membrane. Interacts with outer membrane receptor proteins that carry out high-affinity binding and energy dependent uptake into the periplasmic space of specific substrates. It could act to transduce energy from the cytoplasmic membrane to specific energy-requiring processes in the outer membrane, resulting in the release into the periplasm of ligands bound by these outer membrane proteins. The sequence is that of Protein tonB2 (tonB2) from Pseudomonas aeruginosa (strain ATCC 15692 / DSM 22644 / CIP 104116 / JCM 14847 / LMG 12228 / 1C / PRS 101 / PAO1).